Reading from the N-terminus, the 291-residue chain is E3 ubiquitin-protein ligase RZFP34 (291 aa).

The CHY-type zinc-finger motif lies at 20-96 (IGSGHYGCSH…VQQNCSNCGV (77 aa)). 24 residues coordinate Zn(2+): C27, H29, C40, C41, C47, C50, H51, H66, C78, C81, C91, C94, C103, C106, H119, C120, C123, C126, H136, C137, C140, C143, H152, and C154. The CTCHY-type zinc finger occupies 98 to 162 (MGKYFCSKCK…QCVEGAMHHN (65 aa)). Residues 163–206 (CPVCFEYLFDSTRDITVLRCGHTMHLECTKDMGLHNRYTCPVCS) form an RING-type; atypical zinc finger. S173 carries the phosphoserine modification. T178 carries the phosphothreonine modification. Residue S208 is modified to Phosphoserine. Residues 271-291 (QRGSDSHSCSSGMPQVVGSTG) are disordered.

In terms of assembly, interacts with SRK2D/2SNRK2.2, SRK2I/SNRK2.3 and SRK2E/SNRK2.6. Phosphorylated at Ser-173, Thr-178 and Ser-208 by SRK2E/SNRK2.6 in response to abscisic acid (ABA). Phosphorylation activates its E3 ubiquitin-protein ligase activity. As to expression, expressed in roots, leaves, and anthers and stigma of open flowers.

The protein localises to the nucleus. It localises to the cytoplasm. It is found in the endoplasmic reticulum. It carries out the reaction S-ubiquitinyl-[E2 ubiquitin-conjugating enzyme]-L-cysteine + [acceptor protein]-L-lysine = [E2 ubiquitin-conjugating enzyme]-L-cysteine + N(6)-ubiquitinyl-[acceptor protein]-L-lysine.. Its pathway is protein modification; protein ubiquitination. Its function is as follows. Possesses E3 ubiquitin-protein ligase activity in vitro. Mediates mainly 'Lys-48'-linked polyubiquitination. Promotes abscisic acid (ABA)-induced stomatal closure, reactive oxygen species (ROS) production and drought tolerance. Involved in the regulation of stomatal aperture. The chain is E3 ubiquitin-protein ligase RZFP34 from Arabidopsis thaliana (Mouse-ear cress).